The following is a 293-amino-acid chain: Cytidine deaminase (293 aa).

2 consecutive CMP/dCMP-type deaminase domains span residues 47-166 (DDRA…FGPA) and 186-293 (VSDD…YQAV). 88–90 (NME) serves as a coordination point for substrate. Zn(2+) is bound at residue histidine 101. Glutamate 103 (proton donor) is an active-site residue. Zn(2+)-binding residues include cysteine 128 and cysteine 131.

This sequence belongs to the cytidine and deoxycytidylate deaminase family. As to quaternary structure, homodimer. Requires Zn(2+) as cofactor.

The enzyme catalyses cytidine + H2O + H(+) = uridine + NH4(+). It catalyses the reaction 2'-deoxycytidine + H2O + H(+) = 2'-deoxyuridine + NH4(+). This enzyme scavenges exogenous and endogenous cytidine and 2'-deoxycytidine for UMP synthesis. The chain is Cytidine deaminase from Aeromonas hydrophila subsp. hydrophila (strain ATCC 7966 / DSM 30187 / BCRC 13018 / CCUG 14551 / JCM 1027 / KCTC 2358 / NCIMB 9240 / NCTC 8049).